Reading from the N-terminus, the 95-residue chain is MGKGTGSFGKRRNKSHTLCVRCGRRSFHIQKSRCSACAYPAARKRTYNWSVKAIRRKTTGTGRMRYLRNVPRRFKTGFREGTEAKPRSKASASSA.

Cysteine 19, cysteine 22, cysteine 34, and cysteine 37 together coordinate Zn(2+). The C4-type zinc-finger motif lies at 19 to 37 (CVRCGRRSFHIQKSRCSAC). Residues 73-95 (RFKTGFREGTEAKPRSKASASSA) are disordered. Residues 77–86 (GFREGTEAKP) show a composition bias toward basic and acidic residues.

This sequence belongs to the eukaryotic ribosomal protein eL37 family. The cofactor is Zn(2+).

Binds to the 23S rRNA. This chain is Large ribosomal subunit protein eL37x (RPL37C), found in Arabidopsis thaliana (Mouse-ear cress).